The chain runs to 223 residues: Deoxyribose-phosphate aldolase 2 (223 aa).

The active-site Proton donor/acceptor is aspartate 89. Lysine 152 acts as the Schiff-base intermediate with acetaldehyde in catalysis. Lysine 181 functions as the Proton donor/acceptor in the catalytic mechanism.

The protein belongs to the DeoC/FbaB aldolase family. DeoC type 1 subfamily.

It is found in the cytoplasm. The catalysed reaction is 2-deoxy-D-ribose 5-phosphate = D-glyceraldehyde 3-phosphate + acetaldehyde. It participates in carbohydrate degradation; 2-deoxy-D-ribose 1-phosphate degradation; D-glyceraldehyde 3-phosphate and acetaldehyde from 2-deoxy-alpha-D-ribose 1-phosphate: step 2/2. In terms of biological role, catalyzes a reversible aldol reaction between acetaldehyde and D-glyceraldehyde 3-phosphate to generate 2-deoxy-D-ribose 5-phosphate. The chain is Deoxyribose-phosphate aldolase 2 from Bacillus licheniformis (strain ATCC 14580 / DSM 13 / JCM 2505 / CCUG 7422 / NBRC 12200 / NCIMB 9375 / NCTC 10341 / NRRL NRS-1264 / Gibson 46).